A 138-amino-acid polypeptide reads, in one-letter code: Acidic phospholipase A2 VP7 (138 aa).

The N-terminal stretch at 1 to 16 (MRTLWIVAVCLMGVEG) is a signal peptide. 7 cysteine pairs are disulfide-bonded: C42-C131, C44-C60, C59-C111, C65-C138, C66-C104, C73-C97, and C91-C102. The Ca(2+) site is built by Y43, G45, and G47. Residue H63 is part of the active site. A Ca(2+)-binding site is contributed by D64. Residue D105 is part of the active site.

The protein belongs to the phospholipase A2 family. Group II subfamily. D49 sub-subfamily. Does not form a complex. Ca(2+) serves as cofactor. Expressed by the venom gland.

The protein resides in the secreted. The enzyme catalyses a 1,2-diacyl-sn-glycero-3-phosphocholine + H2O = a 1-acyl-sn-glycero-3-phosphocholine + a fatty acid + H(+). Its function is as follows. Snake venom phospholipase A2 (PLA2) that is not toxic by itself, but the synergistical mixture of a basic and this acidic protein is lethal. PLA2 catalyzes the calcium-dependent hydrolysis of the 2-acyl groups in 3-sn-phosphoglycerides. In Daboia palaestinae (Palestine viper), this protein is Acidic phospholipase A2 VP7.